The sequence spans 401 residues: Argininosuccinate synthase (401 aa).

Position 9 to 17 (9 to 17 (AYSGGLDTS)) interacts with ATP. Residue Tyr86 coordinates L-citrulline. ATP is bound at residue Gly116. L-aspartate contacts are provided by Thr118, Asn122, and Asp123. Asn122 contributes to the L-citrulline binding site. Positions 126, 174, 183, 259, and 271 each coordinate L-citrulline.

This sequence belongs to the argininosuccinate synthase family. Type 1 subfamily. Homotetramer.

Its subcellular location is the cytoplasm. It catalyses the reaction L-citrulline + L-aspartate + ATP = 2-(N(omega)-L-arginino)succinate + AMP + diphosphate + H(+). It participates in amino-acid biosynthesis; L-arginine biosynthesis; L-arginine from L-ornithine and carbamoyl phosphate: step 2/3. The sequence is that of Argininosuccinate synthase from Bacillus cereus (strain AH187).